Reading from the N-terminus, the 378-residue chain is Cobalt-precorrin-5B C(1)-methyltransferase (378 aa).

Belongs to the CbiD family.

It catalyses the reaction Co-precorrin-5B + S-adenosyl-L-methionine = Co-precorrin-6A + S-adenosyl-L-homocysteine. Its pathway is cofactor biosynthesis; adenosylcobalamin biosynthesis; cob(II)yrinate a,c-diamide from sirohydrochlorin (anaerobic route): step 6/10. Its function is as follows. Catalyzes the methylation of C-1 in cobalt-precorrin-5B to form cobalt-precorrin-6A. The sequence is that of Cobalt-precorrin-5B C(1)-methyltransferase from Methanococcus aeolicus (strain ATCC BAA-1280 / DSM 17508 / OCM 812 / Nankai-3).